Reading from the N-terminus, the 342-residue chain is Cellular tumor antigen p53 (342 aa).

Residues 1–35 (MEEADLTLPLSQDTFHDLWNNVFLSTENESLPPPE) are transcription activation (acidic). A DNA-binding region spans residues 68 to 255 (NYAGEHGFNL…KTEEGNLEKS (188 aa)). The Zn(2+) site is built by C142, H145, C201, and C205. An interaction with DNA region spans residues 236-243 (RVCACPGR). The segment covering 244–256 (DRKTEEGNLEKSG) has biased composition (basic and acidic residues). A disordered region spans residues 244-287 (DRKTEEGNLEKSGTKQTKKRKSAPAPDTSTAKKSKSASSGEDED). The Bipartite nuclear localization signal signature appears at 261-278 (KKRKSAPAPDTSTAKKSK). Residues 271-282 (TSTAKKSKSASS) show a composition bias toward low complexity. The interval 288–317 (KEIYTLSIRGRNRYLWFKSLNDGLELMDKT) is oligomerization. Residues 302 to 313 (LWFKSLNDGLEL) carry the Nuclear export signal motif. Residues 318-342 (GPKIKQEIPAPSSGKRLLKGGSDSD) form a disordered region. Residues 319–336 (PKIKQEIPAPSSGKRLLK) form a basic (repression of DNA-binding) region.

Belongs to the p53 family. In terms of assembly, binds DNA as a homotetramer. Requires Zn(2+) as cofactor.

The protein localises to the cytoplasm. It localises to the nucleus. Multifunctional transcription factor that induces cell cycle arrest, DNA repair or apoptosis upon binding to its target DNA sequence. Acts as a tumor suppressor in many tumor types; induces growth arrest or apoptosis depending on the physiological circumstances and cell type. Negatively regulates cell division by controlling expression of a set of genes required for this process. One of the activated genes is an inhibitor of cyclin-dependent kinases. Apoptosis induction seems to be mediated either by stimulation of BAX and FAS antigen expression, or by repression of Bcl-2 expression. The sequence is that of Cellular tumor antigen p53 (tp53) from Xiphophorus maculatus (Southern platyfish).